A 248-amino-acid polypeptide reads, in one-letter code: 14-3-3-like protein G-BOX factor 14 lambda (248 aa).

Serine 70, serine 112, and serine 193 each carry phosphoserine; by CRPK1. At threonine 214 the chain carries Phosphothreonine; by CRPK1.

Belongs to the 14-3-3 family. Interacts with SERK1 in the cell membrane. Component of the SERK1 signaling complex, composed of KAPP, CDC48A, GRF6 or GRF7, SERK1, SERK2, SERK3/BAK1 and BRI1. Interacts with TPK1. Interacts with ADF1. Binds to CRPK1 at the plasma membrane. Interacts with DREB1A and DREB1B in the nucleus when activated by CRPK1-mediated phosphorylation upon freezing. Interacts with CINV1. Binds to the N-terminal region of B1L. Post-translationally, transphosphorylated by SERK1. In terms of processing, phosphorylated by CRPK1 in response to cold.

The protein resides in the nucleus. It is found in the cell membrane. It localises to the cytoplasm. Its function is as follows. Is associated with a DNA binding complex that binds to the G box, a well-characterized cis-acting DNA regulatory element found in plant genes. Specific negative regulator of slow-vacuolar (SV) ion channel. Mediates F-actin dynamics possibly through inhibiting ADF1 phosphorylation. Negative regulator of freezing tolerance that modulates cold-responsive C-repeat-binding factors (CBF) DREB1A and DREB1B proteins stability by facilitating their ubiquitin-mediated degradation when activated by CRPK1-mediated phosphorylation in freezing conditions; this processus is counteracted by B1L. This chain is 14-3-3-like protein G-BOX factor 14 lambda, found in Arabidopsis thaliana (Mouse-ear cress).